An 83-amino-acid chain; its full sequence is U25-theraphotoxin-Cg1a (83 aa).

A signal peptide spans Met-1–Ala-23. The propeptide occupies Gln-24–Arg-48. Disulfide bonds link Cys-50–Cys-66, Cys-57–Cys-71, and Cys-65–Cys-81.

The protein belongs to the neurotoxin 07 (Beta/delta-agtx) family. 03 (aga-4) subfamily. JZTX sub-subfamily. In terms of tissue distribution, expressed by the venom gland.

The protein localises to the secreted. Functionally, inhibits TTX-sensitive sodium currents in rat dorsal root ganglion (DRG) neurons. This chain is U25-theraphotoxin-Cg1a, found in Chilobrachys guangxiensis (Chinese earth tiger tarantula).